The chain runs to 238 residues: Cysteine-rich venom protein pseudechetoxin-like (238 aa).

The signal sequence occupies residues 1–19 (MIAFIVLLSLAAVLQQSSG). A propeptide spanning residues 20 to 28 (TVDFASESS) is cleaved from the precursor. Residues 38 to 164 (VDKHNALRRS…STKYLYVCQY (127 aa)) form the SCP domain. Intrachain disulfides connect cysteine 75/cysteine 153, cysteine 92/cysteine 165, cysteine 148/cysteine 162, cysteine 184/cysteine 191, cysteine 187/cysteine 196, cysteine 200/cysteine 233, cysteine 209/cysteine 227, and cysteine 218/cysteine 231. Residues 200-233 (CKYEDDFSNCKALAKNSKCQTEWIKSKCPAACFC) enclose the ShKT domain.

It belongs to the CRISP family. As to expression, expressed by the venom gland.

The protein localises to the secreted. Its function is as follows. Blocks olfactory (CNGA2) and retinal (CNGA1) CNG channel currents. Does not affect neither depolarization- nor caffeine-induced contraction of smooth muscle. This is Cysteine-rich venom protein pseudechetoxin-like from Notechis scutatus scutatus (Mainland tiger snake).